Consider the following 239-residue polypeptide: Tubulin beta-3 chain (239 aa).

GTP is bound at residue N22. The segment at E207 to A239 is disordered. Residues X230–A239 show a composition bias toward acidic residues.

The protein belongs to the tubulin family. In terms of assembly, dimer of alpha and beta chains. A typical microtubule is a hollow water-filled tube with an outer diameter of 25 nm and an inner diameter of 15 nM. Alpha-beta heterodimers associate head-to-tail to form protofilaments running lengthwise along the microtubule wall with the beta-tubulin subunit facing the microtubule plus end conferring a structural polarity. Microtubules usually have 13 protofilaments but different protofilament numbers can be found in some organisms and specialized cells. Mg(2+) serves as cofactor.

The protein localises to the cytoplasm. Its subcellular location is the cytoskeleton. Tubulin is the major constituent of microtubules, a cylinder consisting of laterally associated linear protofilaments composed of alpha- and beta-tubulin heterodimers. Microtubules grow by the addition of GTP-tubulin dimers to the microtubule end, where a stabilizing cap forms. Below the cap, tubulin dimers are in GDP-bound state, owing to GTPase activity of alpha-tubulin. This Anemia phyllitidis (Fern) protein is Tubulin beta-3 chain (TUBB3).